The chain runs to 349 residues: Ribonucleoside-diphosphate reductase small chain (349 aa).

Residues aspartate 99, glutamate 130, and histidine 133 each coordinate Fe cation. Tyrosine 137 is a catalytic residue. 3 residues coordinate Fe cation: glutamate 192, glutamate 226, and histidine 229.

The protein belongs to the ribonucleoside diphosphate reductase small chain family. In terms of assembly, heterodimer of a large and a small subunit. Fe cation serves as cofactor.

It catalyses the reaction a 2'-deoxyribonucleoside 5'-diphosphate + [thioredoxin]-disulfide + H2O = a ribonucleoside 5'-diphosphate + [thioredoxin]-dithiol. Provides the precursors necessary for DNA synthesis. Catalyzes the biosynthesis of deoxyribonucleotides from the corresponding ribonucleotides. The sequence is that of Ribonucleoside-diphosphate reductase small chain (RNR2) from Plasmodium falciparum (isolate Dd2).